The chain runs to 156 residues: Small ribosomal subunit protein uS7 (156 aa).

This sequence belongs to the universal ribosomal protein uS7 family. As to quaternary structure, part of the 30S ribosomal subunit. Contacts proteins S9 and S11.

One of the primary rRNA binding proteins, it binds directly to 16S rRNA where it nucleates assembly of the head domain of the 30S subunit. Is located at the subunit interface close to the decoding center, probably blocks exit of the E-site tRNA. The chain is Small ribosomal subunit protein uS7 from Trichlorobacter lovleyi (strain ATCC BAA-1151 / DSM 17278 / SZ) (Geobacter lovleyi).